A 400-amino-acid polypeptide reads, in one-letter code: Acetate kinase (400 aa).

Asn7 contacts Mg(2+). ATP is bound at residue Lys14. Arg91 contacts substrate. Catalysis depends on Asp148, which acts as the Proton donor/acceptor. ATP-binding positions include 208 to 212, 284 to 286, and 332 to 336; these read HLGNG, DMR, and GVGEN. Residue Glu384 coordinates Mg(2+).

It belongs to the acetokinase family. Homodimer. Requires Mg(2+) as cofactor. The cofactor is Mn(2+).

The protein localises to the cytoplasm. It carries out the reaction acetate + ATP = acetyl phosphate + ADP. It functions in the pathway metabolic intermediate biosynthesis; acetyl-CoA biosynthesis; acetyl-CoA from acetate: step 1/2. In terms of biological role, catalyzes the formation of acetyl phosphate from acetate and ATP. Can also catalyze the reverse reaction. This chain is Acetate kinase, found in Coprothermobacter proteolyticus (strain ATCC 35245 / DSM 5265 / OCM 4 / BT).